The primary structure comprises 330 residues: Putative aminohydrolase AF_1775 (330 aa).

Residues His54, His56, His181, and Asp253 each contribute to the Zn(2+) site.

It belongs to the metallo-dependent hydrolases superfamily. ATZ/TRZ family.

The chain is Putative aminohydrolase AF_1775 from Archaeoglobus fulgidus (strain ATCC 49558 / DSM 4304 / JCM 9628 / NBRC 100126 / VC-16).